Consider the following 372-residue polypeptide: 4-hydroxy-3-methylbut-2-en-1-yl diphosphate synthase (flavodoxin) (372 aa).

Residues cysteine 270, cysteine 273, cysteine 305, and glutamate 312 each contribute to the [4Fe-4S] cluster site.

The protein belongs to the IspG family. Requires [4Fe-4S] cluster as cofactor.

The catalysed reaction is (2E)-4-hydroxy-3-methylbut-2-enyl diphosphate + oxidized [flavodoxin] + H2O + 2 H(+) = 2-C-methyl-D-erythritol 2,4-cyclic diphosphate + reduced [flavodoxin]. It functions in the pathway isoprenoid biosynthesis; isopentenyl diphosphate biosynthesis via DXP pathway; isopentenyl diphosphate from 1-deoxy-D-xylulose 5-phosphate: step 5/6. Converts 2C-methyl-D-erythritol 2,4-cyclodiphosphate (ME-2,4cPP) into 1-hydroxy-2-methyl-2-(E)-butenyl 4-diphosphate. The sequence is that of 4-hydroxy-3-methylbut-2-en-1-yl diphosphate synthase (flavodoxin) from Vibrio vulnificus (strain CMCP6).